Here is a 279-residue protein sequence, read N- to C-terminus: Energy-coupling factor transporter ATP-binding protein EcfA1 (279 aa).

Residues 5 to 240 (IELKKVTFNY…GDELLQLGLD (236 aa)) enclose the ABC transporter domain. An ATP-binding site is contributed by 40-47 (GHNGSGKS).

The protein belongs to the ABC transporter superfamily. Energy-coupling factor EcfA family. In terms of assembly, forms a stable energy-coupling factor (ECF) transporter complex composed of 2 membrane-embedded substrate-binding proteins (S component), 2 ATP-binding proteins (A component) and 2 transmembrane proteins (T component).

The protein resides in the cell membrane. ATP-binding (A) component of a common energy-coupling factor (ECF) ABC-transporter complex. Unlike classic ABC transporters this ECF transporter provides the energy necessary to transport a number of different substrates. The sequence is that of Energy-coupling factor transporter ATP-binding protein EcfA1 from Streptococcus pyogenes serotype M5 (strain Manfredo).